Here is a 130-residue protein sequence, read N- to C-terminus: Lysozyme C (130 aa).

A C-type lysozyme domain is found at 1-130 (KTYERCELAR…VSPWIRDCGL (130 aa)). 4 disulfide bridges follow: Cys6/Cys128, Cys30/Cys116, Cys65/Cys81, and Cys77/Cys95. Residues Glu35 and Asp53 contribute to the active site.

It belongs to the glycosyl hydrolase 22 family. In terms of assembly, monomer.

The protein resides in the secreted. It carries out the reaction Hydrolysis of (1-&gt;4)-beta-linkages between N-acetylmuramic acid and N-acetyl-D-glucosamine residues in a peptidoglycan and between N-acetyl-D-glucosamine residues in chitodextrins.. Its function is as follows. Lysozymes have primarily a bacteriolytic function; those in tissues and body fluids are associated with the monocyte-macrophage system and enhance the activity of immunoagents. The polypeptide is Lysozyme C (LYZ) (Chelonia mydas (Green sea-turtle)).